Consider the following 255-residue polypeptide: 1-(5-phosphoribosyl)-5-[(5-phosphoribosylamino)methylideneamino] imidazole-4-carboxamide isomerase (255 aa).

Residue aspartate 8 is the Proton acceptor of the active site. Catalysis depends on aspartate 129, which acts as the Proton donor.

Belongs to the HisA/HisF family.

It is found in the cytoplasm. The catalysed reaction is 1-(5-phospho-beta-D-ribosyl)-5-[(5-phospho-beta-D-ribosylamino)methylideneamino]imidazole-4-carboxamide = 5-[(5-phospho-1-deoxy-D-ribulos-1-ylimino)methylamino]-1-(5-phospho-beta-D-ribosyl)imidazole-4-carboxamide. It functions in the pathway amino-acid biosynthesis; L-histidine biosynthesis; L-histidine from 5-phospho-alpha-D-ribose 1-diphosphate: step 4/9. This is 1-(5-phosphoribosyl)-5-[(5-phosphoribosylamino)methylideneamino] imidazole-4-carboxamide isomerase from Prochlorococcus marinus (strain MIT 9312).